Reading from the N-terminus, the 515-residue chain is Maturase K (515 aa).

It belongs to the intron maturase 2 family. MatK subfamily.

It localises to the plastid. The protein resides in the chloroplast. In terms of biological role, usually encoded in the trnK tRNA gene intron. Probably assists in splicing its own and other chloroplast group II introns. This chain is Maturase K, found in Cedrus atlantica (Atlas cedar).